The following is a 562-amino-acid chain: NAD-dependent malic enzyme (562 aa).

The active-site Proton donor is the Y101. R154 contacts NAD(+). Catalysis depends on K172, which acts as the Proton acceptor. A divalent metal cation contacts are provided by E243, D244, and D267. NAD(+) contacts are provided by D267 and N415.

Belongs to the malic enzymes family. Homotetramer. Mg(2+) is required as a cofactor. The cofactor is Mn(2+).

The catalysed reaction is (S)-malate + NAD(+) = pyruvate + CO2 + NADH. It carries out the reaction oxaloacetate + H(+) = pyruvate + CO2. This is NAD-dependent malic enzyme from Aliivibrio fischeri (strain ATCC 700601 / ES114) (Vibrio fischeri).